We begin with the raw amino-acid sequence, 166 residues long: MTIVYLSLGTNMGDRAAYLQKALEALADLPQTRLLAQSSIYETTAWGKTGQADFLNMACQLDTQLTAADFLKETQAIEQSLGRVRHEKWGSRTIDIDILLFGEEVYDTKELKVPHPYMTERAFVLIPLLELQPDLKLPPNHKFLRDYLAALDQSDITLFSAQQTEF.

Belongs to the HPPK family.

The catalysed reaction is 6-hydroxymethyl-7,8-dihydropterin + ATP = (7,8-dihydropterin-6-yl)methyl diphosphate + AMP + H(+). It functions in the pathway cofactor biosynthesis; tetrahydrofolate biosynthesis; 2-amino-4-hydroxy-6-hydroxymethyl-7,8-dihydropteridine diphosphate from 7,8-dihydroneopterin triphosphate: step 4/4. Its function is as follows. Catalyzes the transfer of pyrophosphate from adenosine triphosphate (ATP) to 6-hydroxymethyl-7,8-dihydropterin, an enzymatic step in folate biosynthesis pathway. This Streptococcus pyogenes serotype M1 protein is 2-amino-4-hydroxy-6-hydroxymethyldihydropteridine pyrophosphokinase (folK).